We begin with the raw amino-acid sequence, 394 residues long: Trans-enoyl reductase fumoC (394 aa).

62–65 (VDGK) provides a ligand contact to NADP(+). 152 to 159 (ASLASVGM) is a substrate binding site. NADP(+)-binding positions include 224-227 (SSSS), Tyr-242, and 289-290 (LD). 309 to 313 (TLTQF) provides a ligand contact to substrate. Position 378 to 379 (378 to 379 (VK)) interacts with NADP(+).

It belongs to the zinc-containing alcohol dehydrogenase family. As to quaternary structure, monomer.

It functions in the pathway secondary metabolite biosynthesis. Functionally, trans-enoyl reductase; part of the gene cluster that mediates the biosynthesis of fumosorinone, a 2-pyridone alkaloid that acts as an inhibitor of protein tyrosine phosphatase 1B which is implicated asa negative regulator of insulin receptor signaling and a potential drug target for the treatment of type II diabetes and other associated metabolic syndromes. The polyketide-amino acid backbone of fumosorinone is first assembled by the PKS-NRPS hybrid fumoS. The PKS modules condense one acetyl-CoA starter unit with 7 malonyl-CoA units, programmed C-methylations occurring after the first 3 and the sixth extensions, and cycles of full reduction occurring after the first 2 extensions. Because fumoS lacks a designated enoyl reductase (ER) domain, the required activity is provided the enoyl reductase fumoC. Upon formation of the polyketide backbone on the thiotemplate, the polyketide is transferred to the NRPS module and linked to tyrosine to produce the acyltetramic acid intermediate called prefumosorinone A. The cytochrome P450 monooxygenase fumoA then probably catalyzes an unprecedented oxidative ring expansion of prefumosorinone A to form prefumosorinone B which contains the 2-pyridone core of fumosorinone. The cytochrome P450 monooxygenase fumoB might hydroxylate the nitrogen of prefumosorinone B, but not the acyltetramic acid prefumosorinone A, to form fumosorinone. The sequence is that of Trans-enoyl reductase fumoC from Cordyceps fumosorosea (strain ARSEF 2679) (Isaria fumosorosea).